Reading from the N-terminus, the 365-residue chain is G-protein coupled receptor 4 (365 aa).

Topologically, residues 1–10 are extracellular; it reads MDNSTGTWEG. N-linked (GlcNAc...) asparagine glycosylation is present at Asn-3. The helical transmembrane segment at 11-47 threads the bilayer; the sequence is CHVDSRVDHLFPPSLYIFVIGVGLPTNCLALWAAYRQ. Disulfide bonds link Cys-11–Cys-260 and Cys-92–Cys-170. The Cytoplasmic portion of the chain corresponds to 48-51; sequence VRQR. Residues 52–82 traverse the membrane as a helical segment; the sequence is NELGVYLMNLSIADLLYICTLPLWVDYFLHH. At 83–87 the chain is on the extracellular side; sequence DNWIH. A helical membrane pass occupies residues 88–123; that stretch reads GPGSCKLFGFIFYSNIYISIAFLCCISVDRYLAVAH. The Cytoplasmic segment spans residues 124–131; it reads PLRFARLR. Residues 132–158 form a helical membrane-spanning segment; sequence RVKTAVAVSSVVWATELGANSAPLFHD. The Extracellular segment spans residues 159–174; it reads ELFRDRYNHTFCFEKF. Residues 159–174 form an extracellular loop 2 (ECL2) region; that stretch reads ELFRDRYNHTFCFEKF. Asn-166 carries an N-linked (GlcNAc...) asparagine glycan. The helical transmembrane segment at 175–212 threads the bilayer; it reads PMERWVAWMNLYRVFVGFLFPWALMLLCYRGILRAVQS. Over 213 to 216 the chain is Cytoplasmic; that stretch reads SVST. A helical transmembrane segment spans residues 217–252; it reads ERQEKVKIKRLALSLIAIVLVCFAPYHALLLSRSAV. Topologically, residues 253-262 are extracellular; sequence YLGRPWDCGF. Residues 263-291 form a helical membrane-spanning segment; sequence EERVFSAYHSSLAFTSLNCVADPILYCLV. At 292 to 365 the chain is on the cytoplasmic side; that stretch reads NEGARSDVAK…PLKVLLPPAQ (74 aa).

The protein belongs to the G-protein coupled receptor 1 family.

It localises to the cell membrane. Its activity is regulated as follows. Activated by a network of residues that connects an extracellular-facing cavity to Glu-147, a conserved charged residue buried in the transmembrane core of the receptor. Protonation likely drives conformational changes in extracellular loop 2 (ECL2), which stabilizes movement of transmembrane 3 (TM3) and a series of rearrangements that connect the extracellular-facing cavity to Glu-147, a residue only conserved in proton-sensing G-protein coupled receptors. In terms of biological role, proton-sensing G-protein coupled receptor activated by extracellular pH, which is required to monitor pH changes and generate adaptive reactions. Activated by an optimal pH of 6.8-7.2. Ligand binding causes a conformation change that triggers signaling via guanine nucleotide-binding proteins (G proteins) and modulates the activity of downstream effectors, such as adenylate cyclase. GPR4 is mainly coupled to G(s) G proteins and mediates activation of adenylate cyclase activity. May also couple with G(q) and G(12)/G(13) G proteins. Acts as a key regulator of respiratory sensitivity to CO2/H(+) in brain retrotrapezoid nucleus neurons: acts by mediating detection of protons generated by the formation of carbonic acid in the blood, an important mechanism to impulse to breathe. Also acts as a regulator of acid secretion in the kidney collecting duct by maintaining acid-base homeostasis in the kidney. Acidosis-induced GPR4 activation increases paracellular gap formation and permeability of vascular endothelial cells, possibly through the G(12)/G(13)/Rho GTPase signaling pathway. The protein is G-protein coupled receptor 4 of Rattus norvegicus (Rat).